The chain runs to 29 residues: Cytochrome b6-f complex subunit 8 (29 aa).

Residues 3–23 (ILTLGWVGLLGLFTYSIAMVV) traverse the membrane as a helical segment.

Belongs to the PetN family. The 4 large subunits of the cytochrome b6-f complex are cytochrome b6, subunit IV (17 kDa polypeptide, PetD), cytochrome f and the Rieske protein, while the 4 small subunits are PetG, PetL, PetM and PetN. The complex functions as a dimer.

It is found in the cellular thylakoid membrane. Its function is as follows. Component of the cytochrome b6-f complex, which mediates electron transfer between photosystem II (PSII) and photosystem I (PSI), cyclic electron flow around PSI, and state transitions. The chain is Cytochrome b6-f complex subunit 8 from Cyanothece sp. (strain PCC 7425 / ATCC 29141).